Here is a 505-residue protein sequence, read N- to C-terminus: Metalloprotease TIKI1 (505 aa).

The N-terminal stretch at 1 to 19 is a signal peptide; sequence MSPWSWFLLQTLCLLPTGA. Residues 20–477 are Extracellular-facing; sequence ASRRGAPGTA…RRGHSHHSQM (458 aa). Asn-220, Asn-229, Asn-278, and Asn-336 each carry an N-linked (GlcNAc...) asparagine glycan. Residues 389–428 form a disordered region; that stretch reads PEAVSSGHSTLPPLVSRPGSADTPSEAEQRFRKKRRRSQR. Positions 419 to 428 are enriched in basic residues; it reads FRKKRRRSQR. A helical transmembrane segment spans residues 478 to 498; sequence VASSACLSLWTPVFWVLVLAF. At 499 to 505 the chain is on the cytoplasmic side; that stretch reads QTETPLL.

The protein belongs to the TIKI family. Mn(2+) is required as a cofactor. It depends on Co(2+) as a cofactor.

The protein localises to the cell membrane. In terms of biological role, metalloprotease that acts as a negative regulator of the Wnt signaling pathway by mediating the cleavage of the 8 N-terminal residues of a subset of Wnt proteins. Following cleavage, Wnt proteins become oxidized and form large disulfide-bond oligomers, leading to their inactivation. Able to cleave WNT3A, WNT5, but not WNT11. Required for head formation. This chain is Metalloprotease TIKI1 (TRABD2A), found in Homo sapiens (Human).